We begin with the raw amino-acid sequence, 710 residues long: MEEMEEELKCPVCGSFYREPIILPCSHNLCQACARNILVQTPESESPQSHRAAGSGVSDYDYLDLDKMSLYSEADSGYGSYGGFASAPTTPCQKSPNGVRVFPPAMPPPATHLSPALAPVPRNSCITCPQCHRSLILDDRGLRGFPKNRVLEGVIDRYQQSKAAALKCQLCEKAPKEATVMCEQCDVFYCDPCRLRCHPPRGPLAKHRLVPPAQGRVSRRLSPRKVSTCTDHELENHSMYCVQCKMPVCYQCLEEGKHSSHEVKALGAMWKLHKSQLSQALNGLSDRAKEAKEFLVQLRNMVQQIQENSVEFEACLVAQCDALIDALNRRKAQLLARVNKEHEHKLKVVRDQISHCTVKLRQTTGLMEYCLEVIKENDPSGFLQISDALIRRVHLTEDQWGKGTLTPRMTTDFDLSLDNSPLLQSIHQLDFVQVKASSPVPATPILQLEECCTHNNSATLSWKQPPLSTVPADGYILELDDGNGGQFREVYVGKETMCTVDGLHFNSTYNARVKAFNKTGVSPYSKTLVLQTSEVAWFAFDPGSAHSDIILSNDNLTVTCSSYDDRVVLGKTGFSKGIHYWELTVDRYDNHPDPAFGVARMDVMKDVMLGKDDKAWAMYVDNNRSWFMHNNSHTNRTEGGITKGATIGVLLDLNRKNLTFFINDEQQGPIAFDNVEGLFFPAVSLNRNVQVTLHTGLPVPDFYSSRASIA.

Residues 10-50 (CPVCGSFYREPIILPCSHNLCQACARNILVQTPESESPQSH) form an RING-type zinc finger. Phosphothreonine is present on T41. 3 positions are modified to phosphoserine: S44, S46, and S49. 2 B box-type zinc fingers span residues 163-212 (AAAL…LVPP) and 224-266 (RKVS…VKAL). Zn(2+) contacts are provided by C168, C171, C193, H198, C229, H232, C252, and H258. Positions 273–340 (HKSQLSQALN…KAQLLARVNK (68 aa)) form a coiled coil. Residues 374-432 (IKENDPSGFLQISDALIRRVHLTEDQWGKGTLTPRMTTDFDLSLDNSPLLQSIHQLDFV) enclose the COS domain. Positions 440–535 (VPATPILQLE…KTLVLQTSEV (96 aa)) constitute a Fibronectin type-III domain. A B30.2/SPRY domain is found at 533–702 (SEVAWFAFDP…LHTGLPVPDF (170 aa)).

The protein belongs to the TRIM/RBCC family. In terms of assembly, interacts with SNAP25. Post-translationally, auto-ubiquitinated. Poly-ubiquitinated in cultured cells, whereas it is monoubiquitinated in vitro. Brain. Highly expressed in the cerebral cortex (at protein level). Severely decreased in the affected brain areas in Parkinson disease and dementia with Lewy bodies.

The protein localises to the cytoplasm. The protein resides in the cell projection. It is found in the dendrite. It localises to the cytoplasmic vesicle. Its subcellular location is the secretory vesicle. The protein localises to the synaptic vesicle. The protein resides in the synapse. It is found in the cytoskeleton. It catalyses the reaction S-ubiquitinyl-[E2 ubiquitin-conjugating enzyme]-L-cysteine + [acceptor protein]-L-lysine = [E2 ubiquitin-conjugating enzyme]-L-cysteine + N(6)-ubiquitinyl-[acceptor protein]-L-lysine.. The protein operates within protein modification; protein ubiquitination. Its function is as follows. E3 ubiquitin-protein ligase which ubiquitinates itself in cooperation with an E2 enzyme UBE2D2/UBC4 and serves as a targeting signal for proteasomal degradation. May play a role in regulation of neuronal functions and may also participate in the formation or breakdown of abnormal inclusions in neurodegenerative disorders. May act as a regulator of synaptic vesicle exocytosis by controlling the availability of SNAP25 for the SNARE complex formation. In Homo sapiens (Human), this protein is E3 ubiquitin-protein ligase TRIM9 (TRIM9).